The sequence spans 419 residues: Histidine--tRNA ligase (419 aa).

This sequence belongs to the class-II aminoacyl-tRNA synthetase family. In terms of assembly, homodimer.

The protein resides in the cytoplasm. It carries out the reaction tRNA(His) + L-histidine + ATP = L-histidyl-tRNA(His) + AMP + diphosphate + H(+). In Methylobacillus flagellatus (strain ATCC 51484 / DSM 6875 / VKM B-1610 / KT), this protein is Histidine--tRNA ligase.